The chain runs to 213 residues: Large ribosomal subunit protein mL67 (213 aa).

The protein belongs to the mitochondrion-specific ribosomal protein mL67 family.

It localises to the nucleus. The protein localises to the mitochondrion. Functionally, transcription factor involved in regulation of RNA polymerase II-dependent transcription. Also involved in regulation of mitochondrial DNA recombination, maintenance and repair, and generation of homoplasmic cells. The polypeptide is Large ribosomal subunit protein mL67 (MHR1) (Eremothecium gossypii (strain ATCC 10895 / CBS 109.51 / FGSC 9923 / NRRL Y-1056) (Yeast)).